The primary structure comprises 74 residues: Chitinases 70, 30, and 20.5 kDa (74 aa).

Residues Xaa-1–Thr-27 form an N-terminus of 70 kDa chitinase region. Positions Ala-28–Asp-52 are N-terminus of 30 kDa chitinase. An N-terminus of 20.5 kDa chitinase region spans residues Xaa-53–Cys-74.

It belongs to the glycosyl hydrolase 18 family. Chitinase class II subfamily. As to quaternary structure, homodimer, but homotrimers and homotetramers could be observed for the 20.5 and 30 kDa chitinases. The 70 kDa chitinase is probably the precursor protein of the 30 and 20.5 kDa chitinases.

The enzyme catalyses Random endo-hydrolysis of N-acetyl-beta-D-glucosaminide (1-&gt;4)-beta-linkages in chitin and chitodextrins.. Able to cleave chitin oligomers from N=3 to 6. The sequence is that of Chitinases 70, 30, and 20.5 kDa from Streptomyces olivaceoviridis (Streptomyces corchorusii).